Consider the following 1399-residue polypeptide: DNA-directed RNA polymerase subunit beta' (1399 aa).

Residues Cys-70, Cys-72, Cys-85, and Cys-88 each coordinate Zn(2+). Residues Asp-460, Asp-462, and Asp-464 each coordinate Mg(2+). Residues Cys-814, Cys-888, Cys-895, and Cys-898 each coordinate Zn(2+).

It belongs to the RNA polymerase beta' chain family. As to quaternary structure, the RNAP catalytic core consists of 2 alpha, 1 beta, 1 beta' and 1 omega subunit. When a sigma factor is associated with the core the holoenzyme is formed, which can initiate transcription. Mg(2+) serves as cofactor. The cofactor is Zn(2+).

It carries out the reaction RNA(n) + a ribonucleoside 5'-triphosphate = RNA(n+1) + diphosphate. Its function is as follows. DNA-dependent RNA polymerase catalyzes the transcription of DNA into RNA using the four ribonucleoside triphosphates as substrates. This chain is DNA-directed RNA polymerase subunit beta', found in Pseudomonas putida (strain W619).